The following is a 71-amino-acid chain: Large ribosomal subunit protein bL31 (71 aa).

Residues Cys-16, Cys-18, Cys-37, and Cys-40 each contribute to the Zn(2+) site.

It belongs to the bacterial ribosomal protein bL31 family. Type A subfamily. In terms of assembly, part of the 50S ribosomal subunit. Requires Zn(2+) as cofactor.

Functionally, binds the 23S rRNA. The protein is Large ribosomal subunit protein bL31 of Pectobacterium atrosepticum (strain SCRI 1043 / ATCC BAA-672) (Erwinia carotovora subsp. atroseptica).